The chain runs to 396 residues: Glutamyl-tRNA reductase (396 aa).

Substrate-binding positions include 45 to 48 (TCNR), Ser-101, 106 to 108 (EDQ), and Gln-112. The Nucleophile role is filled by Cys-46. 177-182 (GFGDVG) provides a ligand contact to NADP(+).

Belongs to the glutamyl-tRNA reductase family. In terms of assembly, homodimer.

The enzyme catalyses (S)-4-amino-5-oxopentanoate + tRNA(Glu) + NADP(+) = L-glutamyl-tRNA(Glu) + NADPH + H(+). It functions in the pathway porphyrin-containing compound metabolism; protoporphyrin-IX biosynthesis; 5-aminolevulinate from L-glutamyl-tRNA(Glu): step 1/2. Its function is as follows. Catalyzes the NADPH-dependent reduction of glutamyl-tRNA(Glu) to glutamate 1-semialdehyde (GSA). The chain is Glutamyl-tRNA reductase from Clostridium acetobutylicum (strain ATCC 824 / DSM 792 / JCM 1419 / IAM 19013 / LMG 5710 / NBRC 13948 / NRRL B-527 / VKM B-1787 / 2291 / W).